The chain runs to 557 residues: 6-methylpretetramide 4-monooxygenase (557 aa).

FAD-binding positions include 9-38 (QVLI…VIDR) and 278-288 (MRSGRCFVAGD). Positions 530–557 (LPEDTAPGAGDSAGRPAPDGTRRGVTTE) are disordered.

This sequence belongs to the PheA/TfdB FAD monooxygenase family. It depends on FAD as a cofactor.

The enzyme catalyses 6-methylpretetramide + NADPH + O2 + 2 H(+) = 4-hydroxy-6-methylpretetramide + NADP(+) + H2O. It catalyses the reaction 4-hydroxy-6-methylpretetramide + NADPH + O2 = 4-dedimethylamino-4-oxo-anhydrotetracycline + NADP(+) + H2O. Its pathway is antibiotic biosynthesis; oxytetracycline biosynthesis. Involved in the biosynthesis of the tetracycline antibiotic, oxytetracycline. Catalyzes the double hydroxylation of 6-methylpretetramide to yield 4-keto-anhydrotetracycline, via the insertion of oxygen atoms at the C-12a and C-4 positions of 6-pretetramid. This is 6-methylpretetramide 4-monooxygenase from Streptomyces rimosus.